The sequence spans 1056 residues: Carbamoyl phosphate synthase large chain (1056 aa).

Residues 1 to 398 form a carboxyphosphate synthetic domain region; that stretch reads MPRDPSIKKV…AFLKALRSLD (398 aa). The ATP site is built by arginine 127, arginine 167, glycine 173, glycine 174, glutamate 206, valine 208, glutamate 213, glycine 239, valine 240, histidine 241, glutamine 282, and glutamate 295. The ATP-grasp 1 domain maps to 131 to 324; sequence RDLMNRIGEP…IARVASKIAI (194 aa). Residues glutamine 282, glutamate 295, and asparagine 297 each contribute to the Mg(2+) site. Mn(2+)-binding residues include glutamine 282, glutamate 295, and asparagine 297. The tract at residues 399-532 is oligomerization domain; it reads TDVEHHTVLS…STYGDKVCEV (134 aa). The segment at 533–921 is carbamoyl phosphate synthetic domain; that stretch reads THSDRKKVMI…YKASIAAHNR (389 aa). In terms of domain architecture, ATP-grasp 2 spans 663-854; that stretch reads SVLLDSLSIP…LAKIAARVMM (192 aa). Residues arginine 699, arginine 738, leucine 740, glutamate 745, glycine 770, valine 771, histidine 772, serine 773, glutamine 813, and glutamate 825 each contribute to the ATP site. The Mg(2+) site is built by glutamine 813, glutamate 825, and asparagine 827. Glutamine 813, glutamate 825, and asparagine 827 together coordinate Mn(2+). Residues 920-1056 form the MGS-like domain; sequence NRLPKSGNVF…IEPLQHYIGR (137 aa). Positions 922-1056 are allosteric domain; that stretch reads LPKSGNVFIS…IEPLQHYIGR (135 aa).

The protein belongs to the CarB family. In terms of assembly, composed of two chains; the small (or glutamine) chain promotes the hydrolysis of glutamine to ammonia, which is used by the large (or ammonia) chain to synthesize carbamoyl phosphate. Tetramer of heterodimers (alpha,beta)4. Mg(2+) serves as cofactor. It depends on Mn(2+) as a cofactor.

The catalysed reaction is hydrogencarbonate + L-glutamine + 2 ATP + H2O = carbamoyl phosphate + L-glutamate + 2 ADP + phosphate + 2 H(+). The enzyme catalyses hydrogencarbonate + NH4(+) + 2 ATP = carbamoyl phosphate + 2 ADP + phosphate + 2 H(+). It functions in the pathway amino-acid biosynthesis; L-arginine biosynthesis; carbamoyl phosphate from bicarbonate: step 1/1. Its pathway is pyrimidine metabolism; UMP biosynthesis via de novo pathway; (S)-dihydroorotate from bicarbonate: step 1/3. Large subunit of the glutamine-dependent carbamoyl phosphate synthetase (CPSase). CPSase catalyzes the formation of carbamoyl phosphate from the ammonia moiety of glutamine, carbonate, and phosphate donated by ATP, constituting the first step of 2 biosynthetic pathways, one leading to arginine and/or urea and the other to pyrimidine nucleotides. The large subunit (synthetase) binds the substrates ammonia (free or transferred from glutamine from the small subunit), hydrogencarbonate and ATP and carries out an ATP-coupled ligase reaction, activating hydrogencarbonate by forming carboxy phosphate which reacts with ammonia to form carbamoyl phosphate. The polypeptide is Carbamoyl phosphate synthase large chain (Methanospirillum hungatei JF-1 (strain ATCC 27890 / DSM 864 / NBRC 100397 / JF-1)).